Here is a 314-residue protein sequence, read N- to C-terminus: Ribonuclease Z (314 aa).

Positions 62, 64, 66, 67, 144, 215, and 273 each coordinate Zn(2+). The Proton acceptor role is filled by aspartate 66.

It belongs to the RNase Z family. Homodimer. The cofactor is Zn(2+).

It carries out the reaction Endonucleolytic cleavage of RNA, removing extra 3' nucleotides from tRNA precursor, generating 3' termini of tRNAs. A 3'-hydroxy group is left at the tRNA terminus and a 5'-phosphoryl group is left at the trailer molecule.. In terms of biological role, zinc phosphodiesterase, which displays some tRNA 3'-processing endonuclease activity. Probably involved in tRNA maturation, by removing a 3'-trailer from precursor tRNA. The chain is Ribonuclease Z from Prochlorococcus marinus (strain NATL1A).